The primary structure comprises 654 residues: Amyloid beta precursor like protein 1 (654 aa).

A signal peptide spans 1–38; sequence MGPTSPAARGQGRRWRPPPLPLLLPLSLLLLRAQLAVG. The Extracellular segment spans residues 39 to 584; sequence NLAVGSPSAA…APSGTGVSRE (546 aa). Positions 50–146 are GFLD subdomain; that stretch reads APGSAQVAGL…PFHCLPGEFV (97 aa). The E1 domain maps to 50–212; that stretch reads APGSAQVAGL…RGVEYVCCPP (163 aa). Intrachain disulfides connect Cys60–Cys84, Cys95–Cys140, Cys120–Cys128, Cys156–Cys210, Cys167–Cys197, and Cys181–Cys209. Residues 154–212 form a cuBD subdomain region; that stretch reads EGCRFLHQERMDQCESSTRRHQEAQEACSSQGLILHGSGMLLPCGSDRFRGVEYVCCPP. His174 contacts Cu(2+). Residues Glu206, Cys209, and Cys210 each coordinate Zn(2+). The disordered stretch occupies residues 214–297; sequence ATPNPSGMAA…VTPTPRPTDG (84 aa). A compositionally biased stretch (acidic residues) spans 262-272; sequence QAEEEEEEEEE. Residues 297–488 enclose the E2 domain; the sequence is GVDVYFGMPG…QELRPQIQEL (192 aa). 2 heparin-binding regions span residues 314–346 and 414–445; these read FLRA…SKNL and LMAL…DPEK. A collagen-binding region spans residues 446-463; it reads AQQMRFQVQTHLQVIEER. Residue Asn465 is glycosylated (N-linked (GlcNAc...) asparagine). The tract at residues 497-580 is disordered; it reads SELDASVPGS…RDELAPSGTG (84 aa). Residues 508 to 523 are compositionally biased toward basic and acidic residues; that stretch reads SEDKGSLQPPESKDDP. A compositionally biased stretch (polar residues) spans 529–539; it reads KGSTDQESSSS. A glycan (N-linked (GlcNAc...) asparagine) is linked at Asn555. Cu(2+) is bound at residue His565. A Zn(2+)-binding site is contributed by His565. The chain crosses the membrane as a helical span at residues 585–607; the sequence is ALSGLLIMGAGGGSLIVLSLLLL. Positions 608–619 match the Basolateral sorting signal motif; it reads RKKKPYGTISHG. Topologically, residues 608 to 654 are cytoplasmic; it reads RKKKPYGTISHGVVEVDPMLTLEEQQLRELQRHGYENPTYRFLEERP. Residues 636–652 are interaction with DAB1; that stretch reads ELQRHGYENPTYRFLEE. The segment at 640–654 is interaction with DAB2; it reads HGYENPTYRFLEERP. The short motif at 644–647 is the NPXY motif; contains endocytosis signal element; sequence NPTY.

It belongs to the APP family. Monomer and homodimer. Heparin binding promotes homodimerization. Binds, via its C-terminus, to the PID domain of several cytoplasmic proteins, including APBB and APBA family members, MAPK8IP1 and DAB1. Binding to Dab1 inhibits its serine phosphorylation. Interacts with CPEB1. Interacts (via NPXY motif) with DAB2 (via PID domain); the interaction is impaired by tyrosine phosphorylation of the NPXY motif. Interacts (via NPXY motif) with DAB1. In terms of processing, proteolytically cleaved by caspases during neuronal apoptosis. Cleaved, in vitro, at Asp-624 by caspase-3. Post-translationally, N- and O-glycosylated.

Its subcellular location is the cell membrane. The protein localises to the cytoplasm. May play a role in postsynaptic function. The C-terminal gamma-secretase processed fragment, ALID1, activates transcription activation through APBB1 (Fe65) binding. Couples to JIP signal transduction through C-terminal binding. May interact with cellular G-protein signaling pathways. Can regulate neurite outgrowth through binding to components of the extracellular matrix such as heparin and collagen I. Functionally, the gamma-CTF peptide, C30, is a potent enhancer of neuronal apoptosis. In Mus musculus (Mouse), this protein is Amyloid beta precursor like protein 1 (Aplp1).